Here is a 237-residue protein sequence, read N- to C-terminus: BTB/POZ domain-containing protein KCTD6 (237 aa).

The region spanning 12–81 is the BTB domain; that stretch reads HPVTLNVGGH…LRTSELTLPV (70 aa).

Homopentamer. May be part of a cullin-containing E3 ubiquitin-protein ligase complex.

It participates in protein modification; protein ubiquitination. In terms of biological role, probable substrate-specific adapter of a cullin-containing E3 ubiquitin-protein ligase complex mediating the ubiquitination and subsequent proteasomal degradation of target proteins. The sequence is that of BTB/POZ domain-containing protein KCTD6 (kctd6) from Danio rerio (Zebrafish).